The primary structure comprises 296 residues: NAD kinase (296 aa).

Asp72 serves as the catalytic Proton acceptor. Residues 72 to 73 (DG), 146 to 147 (ND), Arg157, Lys174, Asp176, 187 to 192 (TAYALS), and Gln247 contribute to the NAD(+) site.

It belongs to the NAD kinase family. The cofactor is a divalent metal cation.

Its subcellular location is the cytoplasm. It catalyses the reaction NAD(+) + ATP = ADP + NADP(+) + H(+). Functionally, involved in the regulation of the intracellular balance of NAD and NADP, and is a key enzyme in the biosynthesis of NADP. Catalyzes specifically the phosphorylation on 2'-hydroxyl of the adenosine moiety of NAD to yield NADP. The protein is NAD kinase of Pseudomonas entomophila (strain L48).